We begin with the raw amino-acid sequence, 361 residues long: Alanine racemase (361 aa).

The active-site Proton acceptor; specific for D-alanine is lysine 35. Residue lysine 35 is modified to N6-(pyridoxal phosphate)lysine. A substrate-binding site is contributed by arginine 130. Catalysis depends on tyrosine 257, which acts as the Proton acceptor; specific for L-alanine. Methionine 305 serves as a coordination point for substrate.

Belongs to the alanine racemase family. Requires pyridoxal 5'-phosphate as cofactor.

The catalysed reaction is L-alanine = D-alanine. Its pathway is amino-acid biosynthesis; D-alanine biosynthesis; D-alanine from L-alanine: step 1/1. Catalyzes the interconversion of L-alanine and D-alanine. May also act on other amino acids. The protein is Alanine racemase (alr) of Nitrosomonas eutropha (strain DSM 101675 / C91 / Nm57).